Here is a 417-residue protein sequence, read N- to C-terminus: Ankyrin repeat and SAM domain-containing protein 4B (417 aa).

Positions 1–252 (MSTRYHQAAS…SGDFKEKLQL (252 aa)) are mediates localization to microvilli. ANK repeat units lie at residues 31–60 (DGMTPTLLAAYHGNLEALEIICSRGGDPDR), 64–93 (WGNTPLHFAASNGHAHCVSFLVNFGANIFA), and 97–126 (DLQTPLDAAASREQNECVALLDKAATAQNI). Residues 130–164 (KKVTRLKEQAQKNARRQIKECERLQEKHQNKMAHT) are a coiled coil. The segment at 151-195 (ERLQEKHQNKMAHTYSKEESGTLSSSKGTFSRSSPSNASAPGTFG) is disordered. The span at 171-190 (GTLSSSKGTFSRSSPSNASA) shows a compositional bias: polar residues. A mediates interaction with MYO7B region spans residues 253 to 346 (SAEEDGSVHH…EWEEDVVDAT (94 aa)). The residue at position 283 (serine 283) is a Phosphoserine. The segment at 305-330 (RQGASEADEGAADEEGEENGLKDDLP) is disordered. Residues 310-322 (EADEGAADEEGEE) are compositionally biased toward acidic residues. Positions 351-403 (FLLSQHLEEFLPIFKREQIDLEALLLCSDEDLQSIQMQLGPRKKVLNAINRRK) constitute an SAM domain. The PDZ-binding; mediates interaction with USH1C motif lies at 415-417 (TSL).

As to quaternary structure, part of the IMAC/intermicrovillar adhesion complex/intermicrovillar tip-link complex composed of ANKS4B, MYO7B, USH1C, CDHR2 and CDHR5. Interacts with USH1C; the interaction is direct and is required for ANKS4B localization to the tip of microvilli. Interacts with MYO7B; the interaction is direct. May interact with HSPA5. Expressed in kidney and small intestine.

The protein resides in the cell projection. It is found in the microvillus. As part of the intermicrovillar adhesion complex/IMAC plays a role in epithelial brush border differentiation, controlling microvilli organization and length. Plays a role in assembly of the complex. May play a role in cellular response to endoplasmic reticulum stress. The protein is Ankyrin repeat and SAM domain-containing protein 4B of Homo sapiens (Human).